A 510-amino-acid chain; its full sequence is Ribose import ATP-binding protein RbsA 1 (510 aa).

2 ABC transporter domains span residues 20 to 256 (LEMR…VGRD) and 266 to 510 (VTLG…TGNA). Residue 52 to 59 (GENGAGKS) coordinates ATP.

This sequence belongs to the ABC transporter superfamily. Ribose importer (TC 3.A.1.2.1) family. As to quaternary structure, the complex is composed of an ATP-binding protein (RbsA), two transmembrane proteins (RbsC) and a solute-binding protein (RbsB).

It is found in the cell inner membrane. The enzyme catalyses D-ribose(out) + ATP + H2O = D-ribose(in) + ADP + phosphate + H(+). In terms of biological role, part of the ABC transporter complex RbsABC involved in ribose import. Responsible for energy coupling to the transport system. This Agrobacterium fabrum (strain C58 / ATCC 33970) (Agrobacterium tumefaciens (strain C58)) protein is Ribose import ATP-binding protein RbsA 1.